Here is a 362-residue protein sequence, read N- to C-terminus: Adenosine deaminase (362 aa).

His41 and His43 together coordinate Zn(2+). 43–45 (HLD) contributes to the a purine D-ribonucleoside binding site. Residues 169–183 (IGETGISEESLRKAA) are gating helix loop; regulates binding affinity for substrates and thus substrate selectivity. Gly200 contributes to the a purine D-ribonucleoside binding site. Residue His225 participates in Zn(2+) binding. A purine D-ribonucleoside is bound by residues Glu228, His252, and Asp309. Asp309 provides a ligand contact to Zn(2+).

Belongs to the metallo-dependent hydrolases superfamily. Adenosine and AMP deaminases family. It depends on Zn(2+) as a cofactor.

It carries out the reaction adenosine + H2O + H(+) = inosine + NH4(+). It functions in the pathway purine metabolism; purine nucleoside salvage. Inhibited by coformycin but not by methylthiocoformycin (MT-coformycin). Its function is as follows. Catalyzes the hydrolytic deamination of adenosine to produce inosine. Unlike other Plasmodium adenosine deaminases, does not catalyze the deamination of 5'-methylthioadenosine (MTA). Plays an essential role in the purine salvage pathway which allows the parasite to use host cell purines for the synthesis of nucleic acids. The chain is Adenosine deaminase from Plasmodium gallinaceum.